Consider the following 130-residue polypeptide: S-protein homolog 32 (130 aa).

A signal peptide spans 1–21 (MKYFTIFVFVFSLCMLGHVSG).

Belongs to the plant self-incompatibility (S1) protein family.

Its subcellular location is the secreted. The sequence is that of S-protein homolog 32 from Arabidopsis thaliana (Mouse-ear cress).